Consider the following 389-residue polypeptide: Probable zinc transporter zip2 (389 aa).

7 helical membrane-spanning segments follow: residues 6 to 26 (GWIL…GIYL), 48 to 68 (LVTG…ASVM), 88 to 108 (VFQF…NHFL), 267 to 289 (VLVA…LYLA), 305 to 325 (SCSL…GGIG), 329 to 349 (FLNF…LILS), and 368 to 388 (HSFI…IFDS).

The protein belongs to the ZIP transporter (TC 2.A.5) family.

The protein resides in the endoplasmic reticulum membrane. Probable zinc transporter that may mediate zinc remobilization from the endoplasmic reticulum under zinc limitation. This is Probable zinc transporter zip2 (zip2) from Schizosaccharomyces pombe (strain 972 / ATCC 24843) (Fission yeast).